A 207-amino-acid chain; its full sequence is Thiamine-phosphate synthase (207 aa).

4-amino-2-methyl-5-(diphosphooxymethyl)pyrimidine is bound by residues 38 to 42 and Asn70; that span reads QYRAK. The Mg(2+) site is built by Asp71 and Asp90. Thr109 contacts 4-amino-2-methyl-5-(diphosphooxymethyl)pyrimidine. 135–137 contacts 2-[(2R,5Z)-2-carboxy-4-methylthiazol-5(2H)-ylidene]ethyl phosphate; the sequence is TNS. Residue Lys138 participates in 4-amino-2-methyl-5-(diphosphooxymethyl)pyrimidine binding. Residues Gly165 and 185-186 each bind 2-[(2R,5Z)-2-carboxy-4-methylthiazol-5(2H)-ylidene]ethyl phosphate; that span reads IS.

The protein belongs to the thiamine-phosphate synthase family. Requires Mg(2+) as cofactor.

The catalysed reaction is 2-[(2R,5Z)-2-carboxy-4-methylthiazol-5(2H)-ylidene]ethyl phosphate + 4-amino-2-methyl-5-(diphosphooxymethyl)pyrimidine + 2 H(+) = thiamine phosphate + CO2 + diphosphate. It catalyses the reaction 2-(2-carboxy-4-methylthiazol-5-yl)ethyl phosphate + 4-amino-2-methyl-5-(diphosphooxymethyl)pyrimidine + 2 H(+) = thiamine phosphate + CO2 + diphosphate. It carries out the reaction 4-methyl-5-(2-phosphooxyethyl)-thiazole + 4-amino-2-methyl-5-(diphosphooxymethyl)pyrimidine + H(+) = thiamine phosphate + diphosphate. Its pathway is cofactor biosynthesis; thiamine diphosphate biosynthesis; thiamine phosphate from 4-amino-2-methyl-5-diphosphomethylpyrimidine and 4-methyl-5-(2-phosphoethyl)-thiazole: step 1/1. Its function is as follows. Condenses 4-methyl-5-(beta-hydroxyethyl)thiazole monophosphate (THZ-P) and 2-methyl-4-amino-5-hydroxymethyl pyrimidine pyrophosphate (HMP-PP) to form thiamine monophosphate (TMP). The polypeptide is Thiamine-phosphate synthase (Clostridium perfringens (strain SM101 / Type A)).